The primary structure comprises 558 residues: MPEAAVKYQPYPQIVLPDRTWPSKAITEAPIWCSVDLRDGNQALVDPMGHDRKARMFHLLLDMGFKEIEIGFPSASQTDYDFARWCVEEGNVSEDVSLQVLVQCRPELIARTFEALEGAHRPIVHFYNSTSELQRRVVFGKDVAGIKQIATDAAKMITDMAAKAGGGYRFEYSPESFTGTELEVALEICNAVIEIVRPTADNKLIINLPSTVEMATPNIYADQIEWMCRNLDNRENLIVSLHPHNDRGTGIAATELGLMAGADRVEGTLFGNGERTGNVDVVTLALNMFTQGVDPKLDCSDIERIKEVYEYSNQMVIPERHPYVGELVYTAFSGSHQDAINKGMKAIKQANKPTWEVPYLPIDPRDVGRSYEAIIRINSQSGKGGIAYILQEDYGINLPRNLQIEFREEVQRITDEEGKELPSKRIHQRFIESYVEQPGARIKFVDHHTYPAGEHKGLRVVAAEITDGGETRQIEGKGTGPIDGFINALSIYLGIELSVADYSEHSLQHGSNAAAIAYVEVEYPGGKLFGVGINTNIVAASLEAIVSAANRVLDVVGK.

Positions 30–303 (PIWCSVDLRD…DPKLDCSDIE (274 aa)) constitute a Pyruvate carboxyltransferase domain. Positions 39, 242, 244, and 278 each coordinate Mg(2+). A regulatory domain region spans residues 437-558 (QPGARIKFVD…ANRVLDVVGK (122 aa)).

The protein belongs to the alpha-IPM synthase/homocitrate synthase family. LeuA type 2 subfamily. As to quaternary structure, homodimer. Mg(2+) is required as a cofactor.

The protein resides in the cytoplasm. The enzyme catalyses 3-methyl-2-oxobutanoate + acetyl-CoA + H2O = (2S)-2-isopropylmalate + CoA + H(+). It participates in amino-acid biosynthesis; L-leucine biosynthesis; L-leucine from 3-methyl-2-oxobutanoate: step 1/4. In terms of biological role, catalyzes the condensation of the acetyl group of acetyl-CoA with 3-methyl-2-oxobutanoate (2-ketoisovalerate) to form 3-carboxy-3-hydroxy-4-methylpentanoate (2-isopropylmalate). In Rhizobium meliloti (strain 1021) (Ensifer meliloti), this protein is 2-isopropylmalate synthase.